The chain runs to 468 residues: Plant UBX domain-containing protein 7 (468 aa).

M1 carries the post-translational modification N-acetylmethionine. A UBA-like domain is found at 7-48; sequence SGDQQRLVSSFLEIAVGQTAETARQFLQATSWKLEEAIQLFY. 2 disordered regions span residues 138–168 and 299–329; these read KSPGIWEPDEGDSSASASASASASESASAPR and HFASLSKKRPRGSFSLTPHSKPKEDVAKDEE. Residues 150–166 are compositionally biased toward low complexity; sequence SSASASASASASESASA. The UIM domain occupies 328–347; it reads EEEEELQRALAASLEDNNMK. In terms of domain architecture, UBX spans 385–466; that stretch reads DRSLQCRVGI…GVANSMISAT (82 aa).

As to quaternary structure, interacts with CDC48A via its UBX domain and with ubiquitin via its N-terminal UBA-like domain. As to expression, expressed broadly in sporophyte and gametophyte cells.

Its subcellular location is the nucleus. In terms of biological role, acts as a bridge between CDC48A and ubiquitin, suggesting a role in targeted protein degradation. The sequence is that of Plant UBX domain-containing protein 7 from Arabidopsis thaliana (Mouse-ear cress).